The following is a 122-amino-acid chain: Large ribosomal subunit protein uL18 (122 aa).

A compositionally biased stretch (basic residues) spans 1-19 (MTKLSRKLQTQKRHRRLRR). Positions 1 to 21 (MTKLSRKLQTQKRHRRLRRSV) are disordered.

This sequence belongs to the universal ribosomal protein uL18 family. Part of the 50S ribosomal subunit; part of the 5S rRNA/L5/L18/L25 subcomplex. Contacts the 5S and 23S rRNAs.

In terms of biological role, this is one of the proteins that bind and probably mediate the attachment of the 5S RNA into the large ribosomal subunit, where it forms part of the central protuberance. This Prochlorococcus marinus (strain MIT 9312) protein is Large ribosomal subunit protein uL18.